The chain runs to 265 residues: Capsule polysaccharide export inner-membrane protein CtrC (265 aa).

6 consecutive transmembrane segments (helical) span residues Ile-37–Trp-57, Thr-67–Trp-84, Ile-121–Ile-141, Phe-148–Ile-168, Phe-178–Phe-198, and Trp-238–Phe-258. In terms of domain architecture, ABC transmembrane type-2 spans Ile-37–Phe-258.

The protein belongs to the ABC-2 integral membrane protein family.

The protein localises to the cell inner membrane. May form an ATP-driven capsule polysaccharide export apparatus, in association with the CtrB and CtrD proteins. The protein is Capsule polysaccharide export inner-membrane protein CtrC (ctrC) of Neisseria meningitidis serogroup B (strain ATCC BAA-335 / MC58).